The chain runs to 558 residues: Formate--tetrahydrofolate ligase (558 aa).

67 to 74 (TPAGEGKT) is a binding site for ATP.

It belongs to the formate--tetrahydrofolate ligase family.

It carries out the reaction (6S)-5,6,7,8-tetrahydrofolate + formate + ATP = (6R)-10-formyltetrahydrofolate + ADP + phosphate. It participates in one-carbon metabolism; tetrahydrofolate interconversion. This Ruegeria pomeroyi (strain ATCC 700808 / DSM 15171 / DSS-3) (Silicibacter pomeroyi) protein is Formate--tetrahydrofolate ligase.